Consider the following 235-residue polypeptide: Large ribosomal subunit protein uL1 (235 aa).

It belongs to the universal ribosomal protein uL1 family. Part of the 50S ribosomal subunit.

Its function is as follows. Binds directly to 23S rRNA. The L1 stalk is quite mobile in the ribosome, and is involved in E site tRNA release. Functionally, protein L1 is also a translational repressor protein, it controls the translation of the L11 operon by binding to its mRNA. The protein is Large ribosomal subunit protein uL1 of Synechococcus sp. (strain CC9311).